The chain runs to 159 residues: Transcription elongation factor GreA (159 aa).

The stretch at 14–76 (VKKLEEELEY…QLENMLRNAN (63 aa)) forms a coiled coil.

It belongs to the GreA/GreB family.

Functionally, necessary for efficient RNA polymerase transcription elongation past template-encoded arresting sites. The arresting sites in DNA have the property of trapping a certain fraction of elongating RNA polymerases that pass through, resulting in locked ternary complexes. Cleavage of the nascent transcript by cleavage factors such as GreA or GreB allows the resumption of elongation from the new 3'terminus. GreA releases sequences of 2 to 3 nucleotides. The polypeptide is Transcription elongation factor GreA (Clostridium novyi (strain NT)).